Consider the following 81-residue polypeptide: Photosystem I iron-sulfur center (81 aa).

4Fe-4S ferredoxin-type domains follow at residues 2–31 and 39–68; these read SHSVKIYDTCIGCTQCVRACPTDVLEMIPW and IASAPRTEDCVGCKRCESACPTDFLSVRVY. Positions 11, 14, 17, 21, 48, 51, 54, and 58 each coordinate [4Fe-4S] cluster.

In terms of assembly, the eukaryotic PSI reaction center is composed of at least 11 subunits. It depends on [4Fe-4S] cluster as a cofactor.

The protein localises to the plastid. Its subcellular location is the chloroplast thylakoid membrane. It catalyses the reaction reduced [plastocyanin] + hnu + oxidized [2Fe-2S]-[ferredoxin] = oxidized [plastocyanin] + reduced [2Fe-2S]-[ferredoxin]. Apoprotein for the two 4Fe-4S centers FA and FB of photosystem I (PSI); essential for photochemical activity. FB is the terminal electron acceptor of PSI, donating electrons to ferredoxin. The C-terminus interacts with PsaA/B/D and helps assemble the protein into the PSI complex. Required for binding of PsaD and PsaE to PSI. PSI is a plastocyanin-ferredoxin oxidoreductase, converting photonic excitation into a charge separation, which transfers an electron from the donor P700 chlorophyll pair to the spectroscopically characterized acceptors A0, A1, FX, FA and FB in turn. This chain is Photosystem I iron-sulfur center, found in Acorus calamus (Sweet flag).